The following is a 143-amino-acid chain: Ribonuclease P protein component (143 aa).

The segment at arginine 111 to proline 143 is disordered.

Belongs to the RnpA family. Consists of a catalytic RNA component (M1 or rnpB) and a protein subunit.

It catalyses the reaction Endonucleolytic cleavage of RNA, removing 5'-extranucleotides from tRNA precursor.. Its function is as follows. RNaseP catalyzes the removal of the 5'-leader sequence from pre-tRNA to produce the mature 5'-terminus. It can also cleave other RNA substrates such as 4.5S RNA. The protein component plays an auxiliary but essential role in vivo by binding to the 5'-leader sequence and broadening the substrate specificity of the ribozyme. This Deinococcus geothermalis (strain DSM 11300 / CIP 105573 / AG-3a) protein is Ribonuclease P protein component.